We begin with the raw amino-acid sequence, 305 residues long: NAD kinase 2 (305 aa).

D78 (proton acceptor) is an active-site residue. NAD(+) is bound by residues 78–79, 152–153, D182, 193–198, and N251; these read DG, NE, and TAYSLS.

This sequence belongs to the NAD kinase family. Requires a divalent metal cation as cofactor.

It localises to the cytoplasm. It carries out the reaction NAD(+) + ATP = ADP + NADP(+) + H(+). Functionally, involved in the regulation of the intracellular balance of NAD and NADP, and is a key enzyme in the biosynthesis of NADP. Catalyzes specifically the phosphorylation on 2'-hydroxyl of the adenosine moiety of NAD to yield NADP. In Synechococcus sp. (strain ATCC 27144 / PCC 6301 / SAUG 1402/1) (Anacystis nidulans), this protein is NAD kinase 2.